Here is a 168-residue protein sequence, read N- to C-terminus: Cell division inhibitor SulA (168 aa).

The segment at 106–112 (ALQTGNY) is ftsZ binding. The interval 161–168 (KIHSSLYH) is lon protease binding.

The protein belongs to the SulA family. In terms of assembly, interacts with FtsZ. Post-translationally, is rapidly cleaved and degraded by the Lon protease once DNA damage is repaired.

In terms of biological role, component of the SOS system and an inhibitor of cell division. Accumulation of SulA causes rapid cessation of cell division and the appearance of long, non-septate filaments. In the presence of GTP, binds a polymerization-competent form of FtsZ in a 1:1 ratio, thus inhibiting FtsZ polymerization and therefore preventing it from participating in the assembly of the Z ring. This mechanism prevents the premature segregation of damaged DNA to daughter cells during cell division. This is Cell division inhibitor SulA from Serratia marcescens.